Consider the following 638-residue polypeptide: DNA gyrase subunit B (638 aa).

Positions 422–536 (SELYIVEGDS…NGYVYIAQPP (115 aa)) constitute a Toprim domain. Mg(2+) contacts are provided by Glu-428, Asp-501, and Asp-503.

This sequence belongs to the type II topoisomerase GyrB family. As to quaternary structure, heterotetramer, composed of two GyrA and two GyrB chains. In the heterotetramer, GyrA contains the active site tyrosine that forms a transient covalent intermediate with DNA, while GyrB binds cofactors and catalyzes ATP hydrolysis. Mg(2+) serves as cofactor. Mn(2+) is required as a cofactor. Requires Ca(2+) as cofactor.

It localises to the cytoplasm. The enzyme catalyses ATP-dependent breakage, passage and rejoining of double-stranded DNA.. Its function is as follows. A type II topoisomerase that negatively supercoils closed circular double-stranded (ds) DNA in an ATP-dependent manner to modulate DNA topology and maintain chromosomes in an underwound state. Negative supercoiling favors strand separation, and DNA replication, transcription, recombination and repair, all of which involve strand separation. Also able to catalyze the interconversion of other topological isomers of dsDNA rings, including catenanes and knotted rings. Type II topoisomerases break and join 2 DNA strands simultaneously in an ATP-dependent manner. This Bacillus subtilis (strain 168) protein is DNA gyrase subunit B.